Reading from the N-terminus, the 611-residue chain is Phosphomethylpyrimidine synthase (611 aa).

Substrate-binding positions include N212, M241, Y270, H306, 326-328 (SRG), 367-370 (DGLR), and E406. H410 contributes to the Zn(2+) binding site. Y433 lines the substrate pocket. Residue H474 participates in Zn(2+) binding. Residues C554, C557, and C562 each contribute to the [4Fe-4S] cluster site.

Belongs to the ThiC family. In terms of assembly, homodimer. The cofactor is [4Fe-4S] cluster.

It carries out the reaction 5-amino-1-(5-phospho-beta-D-ribosyl)imidazole + S-adenosyl-L-methionine = 4-amino-2-methyl-5-(phosphooxymethyl)pyrimidine + CO + 5'-deoxyadenosine + formate + L-methionine + 3 H(+). It participates in cofactor biosynthesis; thiamine diphosphate biosynthesis. Catalyzes the synthesis of the hydroxymethylpyrimidine phosphate (HMP-P) moiety of thiamine from aminoimidazole ribotide (AIR) in a radical S-adenosyl-L-methionine (SAM)-dependent reaction. In Bartonella bacilliformis (strain ATCC 35685 / KC583 / Herrer 020/F12,63), this protein is Phosphomethylpyrimidine synthase.